The primary structure comprises 93 residues: Long neurotoxin 2 (93 aa).

Residues 1–21 form the signal peptide; the sequence is MKILLLTLVVVTIVCLDLAYT. Intrachain disulfides connect Cys-24/Cys-42, Cys-35/Cys-63, Cys-48/Cys-52, Cys-67/Cys-78, and Cys-79/Cys-84.

Belongs to the three-finger toxin family. Long-chain subfamily. Type II alpha-neurotoxin sub-subfamily. In terms of tissue distribution, expressed by the venom gland.

Its subcellular location is the secreted. Binds with high affinity to muscular (alpha-1/CHRNA1) and neuronal (alpha-7/CHRNA7) nicotinic acetylcholine receptor (nAChR) and inhibits acetylcholine from binding to the receptor, thereby impairing neuromuscular and neuronal transmission. The sequence is that of Long neurotoxin 2 from Hydrophis hardwickii (Hardwick's spine-bellied seasnake).